Here is a 435-residue protein sequence, read N- to C-terminus: Serine--tRNA ligase (435 aa).

242–244 (TAE) is a binding site for L-serine. Residue 273-275 (RSE) coordinates ATP. Residue Glu-296 participates in L-serine binding. 360–363 (EISS) is an ATP binding site. Ser-396 provides a ligand contact to L-serine.

Belongs to the class-II aminoacyl-tRNA synthetase family. Type-1 seryl-tRNA synthetase subfamily. As to quaternary structure, homodimer. The tRNA molecule binds across the dimer.

The protein localises to the cytoplasm. The catalysed reaction is tRNA(Ser) + L-serine + ATP = L-seryl-tRNA(Ser) + AMP + diphosphate + H(+). It carries out the reaction tRNA(Sec) + L-serine + ATP = L-seryl-tRNA(Sec) + AMP + diphosphate + H(+). It functions in the pathway aminoacyl-tRNA biosynthesis; selenocysteinyl-tRNA(Sec) biosynthesis; L-seryl-tRNA(Sec) from L-serine and tRNA(Sec): step 1/1. In terms of biological role, catalyzes the attachment of serine to tRNA(Ser). Is also able to aminoacylate tRNA(Sec) with serine, to form the misacylated tRNA L-seryl-tRNA(Sec), which will be further converted into selenocysteinyl-tRNA(Sec). The polypeptide is Serine--tRNA ligase (Vibrio atlanticus (strain LGP32) (Vibrio splendidus (strain Mel32))).